The chain runs to 144 residues: Large ribosomal subunit protein uL15 (144 aa).

The segment at Met1–Glu51 is disordered. The span at Arg21 to Ala31 shows a compositional bias: gly residues.

This sequence belongs to the universal ribosomal protein uL15 family. As to quaternary structure, part of the 50S ribosomal subunit.

Functionally, binds to the 23S rRNA. The polypeptide is Large ribosomal subunit protein uL15 (Leptothrix cholodnii (strain ATCC 51168 / LMG 8142 / SP-6) (Leptothrix discophora (strain SP-6))).